Reading from the N-terminus, the 333-residue chain is N-acetyl-gamma-glutamyl-phosphate reductase (333 aa).

Cys136 is an active-site residue.

It belongs to the NAGSA dehydrogenase family. Type 1 subfamily.

The protein resides in the cytoplasm. It carries out the reaction N-acetyl-L-glutamate 5-semialdehyde + phosphate + NADP(+) = N-acetyl-L-glutamyl 5-phosphate + NADPH + H(+). It functions in the pathway amino-acid biosynthesis; L-arginine biosynthesis; N(2)-acetyl-L-ornithine from L-glutamate: step 3/4. Functionally, catalyzes the NADPH-dependent reduction of N-acetyl-5-glutamyl phosphate to yield N-acetyl-L-glutamate 5-semialdehyde. This is N-acetyl-gamma-glutamyl-phosphate reductase from Xylella fastidiosa (strain 9a5c).